A 550-amino-acid chain; its full sequence is Palmdelphin (550 aa).

The residue at position 1 (methionine 1) is an N-acetylmethionine. A coiled-coil region spans residues 2-106 (EEAELVKERL…LQISTNEEAI (105 aa)). Lysine 125 is covalently cross-linked (Glycyl lysine isopeptide (Lys-Gly) (interchain with G-Cter in SUMO2)). A Phosphoserine modification is found at serine 135. Lysine 179 participates in a covalent cross-link: Glycyl lysine isopeptide (Lys-Gly) (interchain with G-Cter in SUMO1); alternate. Lysine 179 participates in a covalent cross-link: Glycyl lysine isopeptide (Lys-Gly) (interchain with G-Cter in SUMO2); alternate. Over residues 248-259 (ERNSKSPTEYHE) the composition is skewed to basic and acidic residues. The tract at residues 248–280 (ERNSKSPTEYHEPVYANPFCRPTTPQREKVTPG) is disordered. Residue threonine 271 is modified to Phosphothreonine. Residues serine 321, serine 370, serine 384, and serine 385 each carry the phosphoserine modification. Disordered regions lie at residues 356 to 393 (VMQD…EDEK) and 463 to 528 (HPIA…IAGD). Basic and acidic residues predominate over residues 483–494 (KRAEVNPHENTN). A phosphoserine mark is found at serine 497, serine 514, and serine 519.

Belongs to the paralemmin family. In terms of assembly, interacts with GLUL. Phosphorylated.

Its subcellular location is the cytoplasm. It localises to the cell projection. It is found in the dendrite. The protein localises to the dendritic spine. In Bos taurus (Bovine), this protein is Palmdelphin (PALMD).